A 318-amino-acid chain; its full sequence is Biotin synthase (318 aa).

Positions 44–273 (LCGNKFDLCT…TVQIRLAGGR (230 aa)) constitute a Radical SAM core domain. Residues cysteine 62, cysteine 66, and cysteine 69 each contribute to the [4Fe-4S] cluster site. Positions 106, 138, 198, and 268 each coordinate [2Fe-2S] cluster.

This sequence belongs to the radical SAM superfamily. Biotin synthase family. Homodimer. Requires [4Fe-4S] cluster as cofactor. It depends on [2Fe-2S] cluster as a cofactor.

It carries out the reaction (4R,5S)-dethiobiotin + (sulfur carrier)-SH + 2 reduced [2Fe-2S]-[ferredoxin] + 2 S-adenosyl-L-methionine = (sulfur carrier)-H + biotin + 2 5'-deoxyadenosine + 2 L-methionine + 2 oxidized [2Fe-2S]-[ferredoxin]. It functions in the pathway cofactor biosynthesis; biotin biosynthesis; biotin from 7,8-diaminononanoate: step 2/2. In terms of biological role, catalyzes the conversion of dethiobiotin (DTB) to biotin by the insertion of a sulfur atom into dethiobiotin via a radical-based mechanism. The protein is Biotin synthase of Clostridium botulinum (strain Hall / ATCC 3502 / NCTC 13319 / Type A).